The following is a 439-amino-acid chain: MLRIVDVTSETTDDLRCAVPRADFDVDAAMAAVIPVCSAVRDRGVEALREYSEKFDHVVPEHLRVPVEALATAAANLDGTLRRAFSESIRRRRQVCQEAEVETSSQPVEVAGGARVSQRIVPVGRVGLYVPGGFAPLASSVIMNVVPAQEAGVSSIAVASPPQAEFGGLPHPSILALCHLLGVNEVYAVGGAQAIAMFAYGVEGSDEADSCPRVDMVTGPGNIYVVAAKRCLRGTVGIDSEAGPTEIAILADETADPRHIAADLMSQAEHDTLAAAVLVTDSTTLAEAVQRELAPMVSATLHSERIRTSLTSKQSAIVMVRDIDQGLEVVNAYAAEHLEIQTADAAAVAARVWNAGAIFVGPWAPVSLGDYSAGSTHVLPTAGAACHSSGLSVRSFMRAVHVIDYTEDALLELADSVEAFALAENLPGHANAITVRRSR.

NAD(+) contacts are provided by Tyr-129, Gln-193, and Asn-222. Residues Thr-245, Gln-267, and His-270 each contribute to the substrate site. Zn(2+)-binding residues include Gln-267 and His-270. Active-site proton acceptor residues include Glu-336 and His-337. Positions 337, 370, 424, and 429 each coordinate substrate. Zn(2+) is bound at residue Asp-370. Zn(2+) is bound at residue His-429.

It belongs to the histidinol dehydrogenase family. It depends on Zn(2+) as a cofactor.

The catalysed reaction is L-histidinol + 2 NAD(+) + H2O = L-histidine + 2 NADH + 3 H(+). It participates in amino-acid biosynthesis; L-histidine biosynthesis; L-histidine from 5-phospho-alpha-D-ribose 1-diphosphate: step 9/9. In terms of biological role, catalyzes the sequential NAD-dependent oxidations of L-histidinol to L-histidinaldehyde and then to L-histidine. This Cutibacterium acnes (strain DSM 16379 / KPA171202) (Propionibacterium acnes) protein is Histidinol dehydrogenase.